The primary structure comprises 416 residues: MSATIEREFEELDAQCRWQPLYLEIRNESHDYPHRVAKFPENRNRNRYRDVSPYDHSRVKLQSAENDYINASLVDIEEAQRSYILTQGPLPNTCCHFWLMVWQQKTRAVVMLNRTVEKESVKCAQYWPTDDREMVFKETGFSVKLLSEDVKSYYTVHLLQLENINSGETRTISHFHYTTWPDFGVPESPASFLNFLFKVRESGSLNPDHGPAVIHCSAGIGRSGTFSLVDTCLVLMEKGEDVNVKQILLSMRKYRMGLIQTPDQLRFSYMAIIEGAKYTKGDSNIQKRWKELSKEDLSPVCRHSQNRTMTEKYNGKRIGSEDEKLTGLSSKVPDTVEESSESILRKRIREDRKATTAQKVQQMRQRLNETERKRKRWLYWQPILTKMGFVSVILVGALVGWTLLFQLNVLPRLTDT.

Positions 5–275 (IEREFEELDA…RFSYMAIIEG (271 aa)) constitute a Tyrosine-protein phosphatase domain. Tyrosine 22 is modified (phosphotyrosine). Phosphoserine is present on serine 52. Tyrosine 68 bears the Phosphotyrosine mark. Residues aspartate 182, 216–222 (CSAGIGR), and glutamine 260 contribute to the substrate site. Cysteine 216 functions as the Phosphocysteine intermediate in the catalytic mechanism. Residue cysteine 216 is modified to S-nitrosocysteine. Phosphoserine occurs at positions 293, 298, 304, 320, and 339. Residues 341 to 410 (ESILRKRIRE…WTLLFQLNVL (70 aa)) form an endoplasmic reticulum location region. Residues 371–410 (ERKRKRWLYWQPILTKMGFVSVILVGALVGWTLLFQLNVL) are may mediate interaction with STX17.

This sequence belongs to the protein-tyrosine phosphatase family. Non-receptor class 1 subfamily. Interacts with RMDN3. Interacts with TMED9. Interacts with STX17; dephosphorylates STX17. Interacts with ITGA1 (via cytoplasmic domain); activates the phosphatase activity towards EGFR. Interacts with TRAF2; probably involved in tumor necrosis factor-mediated signaling. Interacts with MET. Interacts with FAM220A and STAT3; interaction with FAM220A promotes interaction of PTPN2 with transcriptional activator STAT3, leading to dephosphorylation of STAT3 by PTPN2 and negative regulation of STAT3 transcriptional activator activity. Post-translationally, specifically phosphorylated in a cell cycle-dependent manner by cyclin-dependent kinases CDK1 and CDK2. Probably activated through phosphorylation by PKR. In terms of tissue distribution, does not show tissue- or cell-type specificity although levels of transcription show variability. Macrophages showed higher levels of expression than lymphocytes.

It is found in the cytoplasm. Its subcellular location is the endoplasmic reticulum-Golgi intermediate compartment. It localises to the endoplasmic reticulum. The protein resides in the nucleus membrane. The protein localises to the nucleus. It is found in the cell membrane. It catalyses the reaction O-phospho-L-tyrosyl-[protein] + H2O = L-tyrosyl-[protein] + phosphate. Non-receptor type tyrosine-specific phosphatase that dephosphorylates receptor protein tyrosine kinases including INSR, EGFR, CSF1R, PDGFR. Also dephosphorylates non-receptor protein tyrosine kinases like JAK1, JAK2, JAK3, Src family kinases, STAT1, STAT3 and STAT6 either in the nucleus or the cytoplasm. Negatively regulates numerous signaling pathways and biological processes like hematopoiesis, inflammatory response, cell proliferation and differentiation, and glucose homeostasis. Plays a multifaceted and important role in the development of the immune system. Functions in T-cell receptor signaling through dephosphorylation of FYN and LCK to control T-cells differentiation and activation. Dephosphorylates CSF1R, negatively regulating its downstream signaling and macrophage differentiation. Negatively regulates cytokine (IL2/interleukin-2 and interferon)-mediated signaling through dephosphorylation of the cytoplasmic kinases JAK1, JAK3 and their substrate STAT1, that propagate signaling downstream of the cytokine receptors. Also regulates the IL6/interleukin-6 and IL4/interleukin-4 cytokine signaling through dephosphorylation of STAT3 and STAT6 respectively. In addition to the immune system, it is involved in anchorage-dependent, negative regulation of EGF-stimulated cell growth. Activated by the integrin ITGA1/ITGB1, it dephosphorylates EGFR and negatively regulates EGF signaling. Dephosphorylates PDGFRB and negatively regulates platelet-derived growth factor receptor-beta signaling pathway and therefore cell proliferation. Negatively regulates tumor necrosis factor-mediated signaling downstream via MAPK through SRC dephosphorylation. May also regulate the hepatocyte growth factor receptor signaling pathway through dephosphorylation of the hepatocyte growth factor receptor MET. Also plays an important role in glucose homeostasis. For instance, negatively regulates the insulin receptor signaling pathway through the dephosphorylation of INSR and control gluconeogenesis and liver glucose production through negative regulation of the IL6 signaling pathways. May also bind DNA. The sequence is that of Tyrosine-protein phosphatase non-receptor type 2 (Ptpn2) from Rattus norvegicus (Rat).